The primary structure comprises 160 residues: Cyclic pyranopterin monophosphate synthase (160 aa).

Substrate is bound by residues 77 to 79 and 114 to 115; these read MCH and ME. Asp129 is an active-site residue.

This sequence belongs to the MoaC family. As to quaternary structure, homohexamer; trimer of dimers.

The enzyme catalyses (8S)-3',8-cyclo-7,8-dihydroguanosine 5'-triphosphate = cyclic pyranopterin phosphate + diphosphate. Its pathway is cofactor biosynthesis; molybdopterin biosynthesis. Functionally, catalyzes the conversion of (8S)-3',8-cyclo-7,8-dihydroguanosine 5'-triphosphate to cyclic pyranopterin monophosphate (cPMP). The sequence is that of Cyclic pyranopterin monophosphate synthase from Listeria welshimeri serovar 6b (strain ATCC 35897 / DSM 20650 / CCUG 15529 / CIP 8149 / NCTC 11857 / SLCC 5334 / V8).